The primary structure comprises 445 residues: Histamine H3 receptor (445 aa).

Topologically, residues 1-39 (MERAPPDGLMNASGTLAGEAAAAGGARGFSAAWTAVLAA) are extracellular. The N-linked (GlcNAc...) asparagine glycan is linked to N11. A helical membrane pass occupies residues 40 to 60 (LMALLIVATVLGNALVMLAFV). The Cytoplasmic segment spans residues 61–70 (ADSSLRTQNN). Residues 71-91 (FFLLNLAISDFLVGAFCIPLY) form a helical membrane-spanning segment. Residues 92–108 (VPYVLTGRWTFGRGLCK) are Extracellular-facing. An intrachain disulfide couples C107 to C188. Residues 109-129 (LWLVVDYLLCASSVFNIVLIS) traverse the membrane as a helical segment. The Cytoplasmic portion of the chain corresponds to 130 to 156 (YDRFLSVTRAVSYRAQQGDTRRAVRKM). A helical membrane pass occupies residues 157-177 (ALVWVLAFLLYGPAILSWEYL). The Extracellular portion of the chain corresponds to 178 to 196 (SGGSSIPEGHCYAEFFYNW). A helical transmembrane segment spans residues 197–217 (YFLITASTLEFFTPFLSVTFF). The Cytoplasmic segment spans residues 218-359 (NLSIYLNIQR…LSRDKKVAKS (142 aa)). Disordered regions lie at residues 234–259 (DGGR…PSCW) and 286–336 (AGEA…LEKR). The segment covering 241–256 (PEPPPDAQPSPPPAPP) has biased composition (pro residues). Residues 290 to 299 (ALGGGSGGGA) show a composition bias toward gly residues. The segment covering 300–312 (AASPTSSSGSSSR) has biased composition (low complexity). The helical transmembrane segment at 360 to 380 (LAIIVSIFGLCWAPYTLLMII) threads the bilayer. The Extracellular segment spans residues 381–396 (RAACHGRCIPDYWYET). The chain crosses the membrane as a helical span at residues 397 to 417 (SFWLLWANSAVNPVLYPLCHY). The Cytoplasmic segment spans residues 418–445 (SFRRAFTKLLCPQKLKVQPHGSLEQCWK). S439 bears the Phosphoserine mark.

It belongs to the G-protein coupled receptor 1 family. As to expression, expressed abundantly in brain, most notably throughout the thalamus, the ventromedial hypothalamus and the caudate nucleus. Isoform 1 is largely predominant in all tissues.

It localises to the cell membrane. The H3 subclass of histamine receptors could mediate the histamine signals in CNS and peripheral nervous system. Signals through the inhibition of adenylate cyclase and displays high constitutive activity (spontaneous activity in the absence of agonist). The sequence is that of Histamine H3 receptor (Hrh3) from Rattus norvegicus (Rat).